A 698-amino-acid polypeptide reads, in one-letter code: Elongation factor G 1 (698 aa).

One can recognise a tr-type G domain in the interval 8 to 290 (ERYRNIGICA…AVIEFLPSPT (283 aa)). GTP is bound by residues 17–24 (AHVDAGKT), 88–92 (DTPGH), and 142–145 (NKMD).

It belongs to the TRAFAC class translation factor GTPase superfamily. Classic translation factor GTPase family. EF-G/EF-2 subfamily.

It is found in the cytoplasm. Catalyzes the GTP-dependent ribosomal translocation step during translation elongation. During this step, the ribosome changes from the pre-translocational (PRE) to the post-translocational (POST) state as the newly formed A-site-bound peptidyl-tRNA and P-site-bound deacylated tRNA move to the P and E sites, respectively. Catalyzes the coordinated movement of the two tRNA molecules, the mRNA and conformational changes in the ribosome. The polypeptide is Elongation factor G 1 (Vibrio cholerae serotype O1 (strain ATCC 39315 / El Tor Inaba N16961)).